A 256-amino-acid chain; its full sequence is Protein FixA (256 aa).

It belongs to the ETF beta-subunit/FixA family. Heterodimer of FixA and FixB.

It participates in amine and polyamine metabolism; carnitine metabolism. Required for anaerobic carnitine reduction. May bring reductant to CaiA. This is Protein FixA from Escherichia coli O7:K1 (strain IAI39 / ExPEC).